The primary structure comprises 282 residues: 1D-myo-inositol 2-acetamido-2-deoxy-alpha-D-glucopyranoside deacetylase (282 aa).

The Zn(2+) site is built by His-6, Asp-9, and His-141.

Belongs to the MshB deacetylase family. Zn(2+) is required as a cofactor.

The catalysed reaction is 1D-myo-inositol 2-acetamido-2-deoxy-alpha-D-glucopyranoside + H2O = 1D-myo-inositol 2-amino-2-deoxy-alpha-D-glucopyranoside + acetate. In terms of biological role, catalyzes the deacetylation of 1D-myo-inositol 2-acetamido-2-deoxy-alpha-D-glucopyranoside (GlcNAc-Ins) in the mycothiol biosynthesis pathway. The polypeptide is 1D-myo-inositol 2-acetamido-2-deoxy-alpha-D-glucopyranoside deacetylase (Nocardiopsis dassonvillei (strain ATCC 23218 / DSM 43111 / CIP 107115 / JCM 7437 / KCTC 9190 / NBRC 14626 / NCTC 10488 / NRRL B-5397 / IMRU 509) (Actinomadura dassonvillei)).